The chain runs to 24 residues: MQWTKPAFTDLRIGFEVTMYFEAR.

Positions 16–20 (EVTMY) form a cross-link, pyrroloquinoline quinone (Glu-Tyr).

This sequence belongs to the PqqA family.

It participates in cofactor biosynthesis; pyrroloquinoline quinone biosynthesis. Its function is as follows. Required for coenzyme pyrroloquinoline quinone (PQQ) biosynthesis. PQQ is probably formed by cross-linking a specific glutamate to a specific tyrosine residue and excising these residues from the peptide. The sequence is that of Coenzyme PQQ synthesis protein A from Acinetobacter baumannii (strain SDF).